A 434-amino-acid polypeptide reads, in one-letter code: UDP-N-acetylmuramoylalanine--D-glutamate ligase (434 aa).

Residue 117 to 123 participates in ATP binding; that stretch reads GTNGKST.

Belongs to the MurCDEF family.

The protein resides in the cytoplasm. The enzyme catalyses UDP-N-acetyl-alpha-D-muramoyl-L-alanine + D-glutamate + ATP = UDP-N-acetyl-alpha-D-muramoyl-L-alanyl-D-glutamate + ADP + phosphate + H(+). It participates in cell wall biogenesis; peptidoglycan biosynthesis. Functionally, cell wall formation. Catalyzes the addition of glutamate to the nucleotide precursor UDP-N-acetylmuramoyl-L-alanine (UMA). The polypeptide is UDP-N-acetylmuramoylalanine--D-glutamate ligase (Sphingopyxis alaskensis (strain DSM 13593 / LMG 18877 / RB2256) (Sphingomonas alaskensis)).